Here is a 515-residue protein sequence, read N- to C-terminus: Cytochrome P450 2D7 (515 aa).

Over 1 to 2 (MG) the chain is Extracellular. Residues 3–23 (LEALVPLAMIVAIFLLLVDLM) traverse the membrane as a helical segment. Residues 24-301 (HRHQRWAARY…DENLRIVVGN (278 aa)) lie on the Cytoplasmic side of the membrane. Residues 302–322 (LFLAGMVTTSTTLAWGLLLMI) traverse the membrane as a helical segment. At 323-515 (LHLDVQRGRR…SPYELCAVPR (193 aa)) the chain is on the extracellular side. The N-linked (GlcNAc...) asparagine glycan is linked to Asn416. Cys461 contacts heme.

This sequence belongs to the cytochrome P450 family. The cofactor is heme. In terms of tissue distribution, expressed in brain cortex (at protein level).

The protein localises to the membrane. The protein resides in the cytoplasm. It is found in the mitochondrion. It carries out the reaction an organic molecule + reduced [NADPH--hemoprotein reductase] + O2 = an alcohol + oxidized [NADPH--hemoprotein reductase] + H2O + H(+). Its function is as follows. May be responsible for the metabolism of many drugs and environmental chemicals that it oxidizes. It may be involved in the metabolism of codeine to morphine. However, another study could not confirm it. The sequence is that of Cytochrome P450 2D7 from Homo sapiens (Human).